A 304-amino-acid polypeptide reads, in one-letter code: Glutaminase (304 aa).

Residues S63, N114, E158, N165, Y189, Y240, and V258 each coordinate substrate.

The protein belongs to the glutaminase family. As to quaternary structure, homotetramer.

It carries out the reaction L-glutamine + H2O = L-glutamate + NH4(+). The sequence is that of Glutaminase from Shewanella loihica (strain ATCC BAA-1088 / PV-4).